A 183-amino-acid chain; its full sequence is Ribosome maturation factor RimM (183 aa).

Residues 104–183 (EGDYYWKDLM…TIEVDWDPGF (80 aa)) enclose the PRC barrel domain.

It belongs to the RimM family. As to quaternary structure, binds ribosomal protein uS19.

The protein resides in the cytoplasm. In terms of biological role, an accessory protein needed during the final step in the assembly of 30S ribosomal subunit, possibly for assembly of the head region. Essential for efficient processing of 16S rRNA. May be needed both before and after RbfA during the maturation of 16S rRNA. It has affinity for free ribosomal 30S subunits but not for 70S ribosomes. The protein is Ribosome maturation factor RimM of Salmonella arizonae (strain ATCC BAA-731 / CDC346-86 / RSK2980).